The primary structure comprises 415 residues: 3-oxoacyl-[acyl-carrier-protein] synthase 2 (415 aa).

The region spanning 3 to 412 (KRRVVVTGMG…GTNGSLVFKK (410 aa)) is the Ketosynthase family 3 (KS3) domain. Residues Cys164, His304, and His342 each act as for beta-ketoacyl synthase activity in the active site.

It belongs to the thiolase-like superfamily. Beta-ketoacyl-ACP synthases family. As to quaternary structure, homodimer.

It carries out the reaction a fatty acyl-[ACP] + malonyl-[ACP] + H(+) = a 3-oxoacyl-[ACP] + holo-[ACP] + CO2. The enzyme catalyses (9Z)-hexadecenoyl-[ACP] + malonyl-[ACP] + H(+) = 3-oxo-(11Z)-octadecenoyl-[ACP] + holo-[ACP] + CO2. It functions in the pathway lipid metabolism; fatty acid biosynthesis. Its function is as follows. Involved in the type II fatty acid elongation cycle. Catalyzes the elongation of a wide range of acyl-ACP by the addition of two carbons from malonyl-ACP to an acyl acceptor. Can efficiently catalyze the conversion of palmitoleoyl-ACP (cis-hexadec-9-enoyl-ACP) to cis-vaccenoyl-ACP (cis-octadec-11-enoyl-ACP), an essential step in the thermal regulation of fatty acid composition. In Vibrio harveyi (Beneckea harveyi), this protein is 3-oxoacyl-[acyl-carrier-protein] synthase 2 (fabF).